The following is a 123-amino-acid chain: Small ribosomal subunit protein uS12 (123 aa).

The residue at position 89 (Asp-89) is a 3-methylthioaspartic acid.

It belongs to the universal ribosomal protein uS12 family. In terms of assembly, part of the 30S ribosomal subunit. Contacts proteins S8 and S17. May interact with IF1 in the 30S initiation complex.

Functionally, with S4 and S5 plays an important role in translational accuracy. In terms of biological role, interacts with and stabilizes bases of the 16S rRNA that are involved in tRNA selection in the A site and with the mRNA backbone. Located at the interface of the 30S and 50S subunits, it traverses the body of the 30S subunit contacting proteins on the other side and probably holding the rRNA structure together. The combined cluster of proteins S8, S12 and S17 appears to hold together the shoulder and platform of the 30S subunit. The polypeptide is Small ribosomal subunit protein uS12 (Afipia carboxidovorans (strain ATCC 49405 / DSM 1227 / KCTC 32145 / OM5) (Oligotropha carboxidovorans)).